Consider the following 46-residue polypeptide: MQVVNSLRSAKQRHPDCQLVKRKGRLYVICKSNPRFKAVQGRKKRR.

Belongs to the bacterial ribosomal protein bL36 family.

The polypeptide is Large ribosomal subunit protein bL36 (Klebsiella pneumoniae (strain 342)).